A 79-amino-acid polypeptide reads, in one-letter code: Putative membrane protein insertion efficiency factor (79 aa).

This sequence belongs to the UPF0161 family.

The protein localises to the cell inner membrane. In terms of biological role, could be involved in insertion of integral membrane proteins into the membrane. In Prochlorococcus marinus (strain NATL1A), this protein is Putative membrane protein insertion efficiency factor.